We begin with the raw amino-acid sequence, 384 residues long: Mitogen-activated protein kinase 8 (384 aa).

Positions 26 to 321 (YQNLKPIGSG…VDEALQHPYI (296 aa)) constitute a Protein kinase domain. Residues 32–40 (IGSGAQGIV) and Lys-55 each bind ATP. Cys-116 is subject to S-nitrosocysteine. Catalysis depends on Asp-151, which acts as the Proton acceptor. Position 183 is a phosphothreonine; by MAP2K7 (Thr-183). The short motif at 183 to 185 (TPY) is the TXY element. The residue at position 185 (Tyr-185) is a Phosphotyrosine; by MAP2K4. At Ser-377 the chain carries Phosphoserine.

This sequence belongs to the protein kinase superfamily. CMGC Ser/Thr protein kinase family. MAP kinase subfamily. In terms of assembly, binds to at least four scaffolding proteins, MAPK8IP1/JIP-1, MAPK8IP2/JIP-2, MAPK8IP3/JIP-3/JSAP1 and SPAG9/MAPK8IP4/JIP-4. These proteins also bind other components of the JNK signaling pathway. Forms a complex with MAPK8IP1 and ARHGEF28. Interacts with TP53 and WWOX. Interacts with JAMP. Interacts with NFATC4. Interacts with MECOM; regulates JNK signaling. Interacts with PIN1; this interaction mediates MAPK8 conformational changes leading to the binding of MAPK8 to its substrates. Interacts with HSF1 (via D domain and preferentially with hyperphosphorylated form); this interaction occurs under both normal growth conditions and immediately upon heat shock. Interacts (phosphorylated form) with NFE2; the interaction phosphorylates NFE2 in undifferentiated cells. Interacts with GRIPAP1. Interacts with POU5F1; phosphorylates POU5F1 at 'Ser-347'. Found in a complex with SH3RF1, RAC1, MAP3K11/MLK3, MAP2K7/MKK7 and MAPK8IP1/JIP1. Found in a complex with SH3RF1, RAC2, MAP3K7/TAK1, MAP2K7/MKK7, MAPK8IP1/JIP1 and MAPK9/JNK2. Mg(2+) is required as a cofactor. In terms of processing, phosphorylated by TAOK2. Dually phosphorylated on Thr-183 and Tyr-185 by MAP2K7 and MAP2K4, which activates the enzyme. May be phosphorylated at Thr-183 and Tyr-185 by MAP3K1/MEKK1. Phosphorylated form is more concentrated at synapses than none-phosphorylated. As to expression, brain (at protein level).

Its subcellular location is the cytoplasm. The protein localises to the nucleus. It localises to the synapse. The enzyme catalyses L-seryl-[protein] + ATP = O-phospho-L-seryl-[protein] + ADP + H(+). It carries out the reaction L-threonyl-[protein] + ATP = O-phospho-L-threonyl-[protein] + ADP + H(+). Its activity is regulated as follows. Inhibited by SERPINB3. Activated by threonine and tyrosine phosphorylation by either of two dual specificity kinases, MAP2K4 and MAP2K7. MAP2K4 shows a strong preference for Tyr-185 while MAP2K7 phosphorylates Tyr-183 preferentially. Inhibited by dual specificity phosphatases, such as DUSP1. Serine/threonine-protein kinase involved in various processes such as cell proliferation, differentiation, migration, transformation and programmed cell death. Extracellular stimuli such as pro-inflammatory cytokines or physical stress stimulate the stress-activated protein kinase/c-Jun N-terminal kinase (SAP/JNK) signaling pathway. In this cascade, two dual specificity kinases MAP2K4/MKK4 and MAP2K7/MKK7 phosphorylate and activate MAPK8/JNK1. In turn, MAPK8/JNK1 phosphorylates a number of transcription factors, primarily components of AP-1 such as JUN, JDP2 and ATF2 and thus regulates AP-1 transcriptional activity. Phosphorylates the replication licensing factor CDT1, inhibiting the interaction between CDT1 and the histone H4 acetylase HBO1 to replication origins. Loss of this interaction abrogates the acetylation required for replication initiation. Promotes stressed cell apoptosis by phosphorylating key regulatory factors including p53/TP53 and Yes-associates protein YAP1. In T-cells, MAPK8 and MAPK9 are required for polarized differentiation of T-helper cells into Th1 cells. Contributes to the survival of erythroid cells by phosphorylating the antagonist of cell death BAD upon EPO stimulation. Mediates starvation-induced BCL2 phosphorylation, BCL2 dissociation from BECN1, and thus activation of autophagy. Phosphorylates STMN2 and hence regulates microtubule dynamics, controlling neurite elongation in cortical neurons. In the developing brain, through its cytoplasmic activity on STMN2, negatively regulates the rate of exit from multipolar stage and of radial migration from the ventricular zone. Phosphorylates several other substrates including heat shock factor protein 4 (HSF4), the deacetylase SIRT1, ELK1, or the E3 ligase ITCH. Phosphorylates the CLOCK-BMAL1 heterodimer and plays a role in the regulation of the circadian clock. Phosphorylates the heat shock transcription factor HSF1, suppressing HSF1-induced transcriptional activity. Phosphorylates POU5F1, which results in the inhibition of POU5F1's transcriptional activity and enhances its proteasomal degradation. Phosphorylates JUND and this phosphorylation is inhibited in the presence of MEN1. In neurons, phosphorylates SYT4 which captures neuronal dense core vesicles at synapses. Phosphorylates EIF4ENIF1/4-ET in response to oxidative stress, promoting P-body assembly. Phosphorylates SIRT6 in response to oxidative stress, stimulating its mono-ADP-ribosyltransferase activity. Phosphorylates NLRP3, promoting assembly of the NLRP3 inflammasome. Phosphorylates ALKBH5 in response to reactive oxygen species (ROS), promoting ALKBH5 sumoylation and inactivation. This is Mitogen-activated protein kinase 8 (Mapk8) from Mus musculus (Mouse).